Here is a 146-residue protein sequence, read N- to C-terminus: Leghemoglobin Lb120-1 (146 aa).

A Globin domain is found at glycine 2–asparagine 146. Residues tyrosine 24 and tyrosine 29 each carry the nitrated tyrosine modification. A heme b-binding site is contributed by serine 44. Position 44 is a phosphoserine (serine 44). Histidine 61 is a binding site for O2. 3 residues coordinate heme b: lysine 64, histidine 93, and lysine 96. At tyrosine 134 the chain carries Nitrated tyrosine.

This sequence belongs to the plant globin family. In terms of assembly, monomer. Post-translationally, nitrated in effective nodules and particularly in hypoxic conditions; this mechanism may play a protective role in the symbiosis by buffering toxic peroxynitrite NO(2)(-). Nitration level decrease during nodule senescence. Phosphorylation at Ser-44 disrupts the molecular environment of its porphyrin ring oxygen binding pocket, thus leading to a reduced oxygen consumption and to the delivery of oxygen O(2) to symbiosomes. Root nodules.

It is found in the cytoplasm. The protein resides in the cytosol. It localises to the nucleus. Leghemoglobin that reversibly binds oxygen O(2) through a pentacoordinated heme iron. In root nodules, facilitates the diffusion of oxygen to the bacteroids while preventing the bacterial nitrogenase from being inactivated by buffering dioxygen, nitric oxide and carbon monoxide, and promoting the formation of reactive oxygen species (ROS, e.g. H(2)O(2)). This role is essential for symbiotic nitrogen fixation (SNF). In Pisum sativum (Garden pea), this protein is Leghemoglobin Lb120-1.